Reading from the N-terminus, the 143-residue chain is MNTYTVKASDIKRDWHVIDASGRVLGEVAAEAAKYLMGKHKPMFCRNLDCGDYVVIINAKKVTVTGNKLDQKIYYRHSGFPGGFRQEKLGDLLKTKPLFVIEHAVKGMIPRNTLGAQILAKLKVYEGEEHPHASQTGEVSKES.

It belongs to the universal ribosomal protein uL13 family. In terms of assembly, part of the 50S ribosomal subunit.

Its function is as follows. This protein is one of the early assembly proteins of the 50S ribosomal subunit, although it is not seen to bind rRNA by itself. It is important during the early stages of 50S assembly. The protein is Large ribosomal subunit protein uL13 of Dehalococcoides mccartyi (strain ATCC BAA-2266 / KCTC 15142 / 195) (Dehalococcoides ethenogenes (strain 195)).